The chain runs to 282 residues: MPPWFRREKAGIRTTREEQNEMPEGQWVKCPETGEITNRRELEENLLVFPGSGYHFGMDSHQYFGFLFDDGDYDLHDTDLRSVDALNFEDRKPYSQRLESAVEETGQNEAVQAATGSVGGHPVSMAGMDFSFIGGSMGSVVGETVARAIKRAYTEGMPLITIAQSGGARMMEGALSLMQMAKTSAHLTRLDEAGLPFISILTHPTTGGVTASFAMLGDIHIAEPDALIGFAGPRVIRETIGSDLPEGFQKSEFLQEHGFVDMIVDRRRLRRRIIRLLNLLME.

The 257-residue stretch at 26–282 (QWVKCPETGE…IIRLLNLLME (257 aa)) folds into the CoA carboxyltransferase N-terminal domain.

Belongs to the AccD/PCCB family. In terms of assembly, acetyl-CoA carboxylase is a heterohexamer composed of biotin carboxyl carrier protein (AccB), biotin carboxylase (AccC) and two subunits each of ACCase subunit alpha (AccA) and ACCase subunit beta (AccD).

Its subcellular location is the cytoplasm. The enzyme catalyses N(6)-carboxybiotinyl-L-lysyl-[protein] + acetyl-CoA = N(6)-biotinyl-L-lysyl-[protein] + malonyl-CoA. The protein operates within lipid metabolism; malonyl-CoA biosynthesis; malonyl-CoA from acetyl-CoA: step 1/1. Component of the acetyl coenzyme A carboxylase (ACC) complex. Biotin carboxylase (BC) catalyzes the carboxylation of biotin on its carrier protein (BCCP) and then the CO(2) group is transferred by the transcarboxylase to acetyl-CoA to form malonyl-CoA. This Salinibacter ruber (strain DSM 13855 / M31) protein is Acetyl-coenzyme A carboxylase carboxyl transferase subunit beta.